We begin with the raw amino-acid sequence, 160 residues long: Type IV major fimbrial protein FimA (160 aa).

Residues 1–7 constitute a propeptide, leader sequence; it reads MKSLQKG. Phenylalanine 8 is modified (N-methylphenylalanine). A helical transmembrane segment spans residues 8-28; the sequence is FTLIELMIVVAIIGILAAFAI. Residues cysteine 63 and cysteine 105 are joined by a disulfide bond.

Belongs to the N-Me-Phe pilin family. As to quaternary structure, the pili are polar flexible filaments of about 5.4 nanometers diameter and 2.5 micrometers average length; they consist of only a single polypeptide chain arranged in a helical configuration of five subunits per turn in the assembled pilus.

It is found in the fimbrium. It localises to the membrane. In terms of biological role, major component of the type IV fimbriae that plays an essential role in twitching motility, natural transformation, and protease secretion. This Dichelobacter nodosus (Bacteroides nodosus) protein is Type IV major fimbrial protein FimA (fimA).